Here is a 245-residue protein sequence, read N- to C-terminus: tRNA (guanine-N(1)-)-methyltransferase (245 aa).

Residues G114 and 133–138 (LGDFVI) contribute to the S-adenosyl-L-methionine site.

Belongs to the RNA methyltransferase TrmD family. In terms of assembly, homodimer.

It is found in the cytoplasm. It carries out the reaction guanosine(37) in tRNA + S-adenosyl-L-methionine = N(1)-methylguanosine(37) in tRNA + S-adenosyl-L-homocysteine + H(+). Functionally, specifically methylates guanosine-37 in various tRNAs. The sequence is that of tRNA (guanine-N(1)-)-methyltransferase from Pediococcus pentosaceus (strain ATCC 25745 / CCUG 21536 / LMG 10740 / 183-1w).